A 153-amino-acid chain; its full sequence is NAD(P)H-quinone oxidoreductase subunit N (153 aa).

Belongs to the complex I NdhN subunit family. NDH-1 can be composed of about 15 different subunits; different subcomplexes with different compositions have been identified which probably have different functions.

It is found in the cellular thylakoid membrane. It catalyses the reaction a plastoquinone + NADH + (n+1) H(+)(in) = a plastoquinol + NAD(+) + n H(+)(out). The enzyme catalyses a plastoquinone + NADPH + (n+1) H(+)(in) = a plastoquinol + NADP(+) + n H(+)(out). Functionally, NDH-1 shuttles electrons from an unknown electron donor, via FMN and iron-sulfur (Fe-S) centers, to quinones in the respiratory and/or the photosynthetic chain. The immediate electron acceptor for the enzyme in this species is believed to be plastoquinone. Couples the redox reaction to proton translocation, and thus conserves the redox energy in a proton gradient. Cyanobacterial NDH-1 also plays a role in inorganic carbon-concentration. This chain is NAD(P)H-quinone oxidoreductase subunit N, found in Synechococcus sp. (strain CC9311).